Reading from the N-terminus, the 148-residue chain is Large ribosomal subunit protein bL9 (148 aa).

It belongs to the bacterial ribosomal protein bL9 family.

Its function is as follows. Binds to the 23S rRNA. The polypeptide is Large ribosomal subunit protein bL9 (Leptospira biflexa serovar Patoc (strain Patoc 1 / Ames)).